We begin with the raw amino-acid sequence, 339 residues long: Ketol-acid reductoisomerase (NADP(+)) (339 aa).

The KARI N-terminal Rossmann domain occupies 1–182 (MRVYYDRDAD…GGGRSGIIET (182 aa)). Residues 24-27 (YGSQ), Lys48, Ser51, Thr53, and 83-86 (DELQ) contribute to the NADP(+) site. His108 is a catalytic residue. Position 134 (Gly134) interacts with NADP(+). Residues 183–328 (NFKEECETDL…AKLRGMMPWI (146 aa)) enclose the KARI C-terminal knotted domain. Mg(2+) contacts are provided by Asp191, Glu195, Glu227, and Glu231. Ser252 provides a ligand contact to substrate.

This sequence belongs to the ketol-acid reductoisomerase family. Mg(2+) serves as cofactor.

It carries out the reaction (2R)-2,3-dihydroxy-3-methylbutanoate + NADP(+) = (2S)-2-acetolactate + NADPH + H(+). The catalysed reaction is (2R,3R)-2,3-dihydroxy-3-methylpentanoate + NADP(+) = (S)-2-ethyl-2-hydroxy-3-oxobutanoate + NADPH + H(+). The protein operates within amino-acid biosynthesis; L-isoleucine biosynthesis; L-isoleucine from 2-oxobutanoate: step 2/4. It participates in amino-acid biosynthesis; L-valine biosynthesis; L-valine from pyruvate: step 2/4. Its function is as follows. Involved in the biosynthesis of branched-chain amino acids (BCAA). Catalyzes an alkyl-migration followed by a ketol-acid reduction of (S)-2-acetolactate (S2AL) to yield (R)-2,3-dihydroxy-isovalerate. In the isomerase reaction, S2AL is rearranged via a Mg-dependent methyl migration to produce 3-hydroxy-3-methyl-2-ketobutyrate (HMKB). In the reductase reaction, this 2-ketoacid undergoes a metal-dependent reduction by NADPH to yield (R)-2,3-dihydroxy-isovalerate. The chain is Ketol-acid reductoisomerase (NADP(+)) from Sinorhizobium fredii (strain NBRC 101917 / NGR234).